Consider the following 296-residue polypeptide: NAD kinase (296 aa).

The Proton acceptor role is filled by aspartate 78. Residues 78–79 (DG), 152–153 (ND), arginine 180, aspartate 182, and glutamine 251 contribute to the NAD(+) site.

Belongs to the NAD kinase family. A divalent metal cation is required as a cofactor.

The protein resides in the cytoplasm. It carries out the reaction NAD(+) + ATP = ADP + NADP(+) + H(+). Its function is as follows. Involved in the regulation of the intracellular balance of NAD and NADP, and is a key enzyme in the biosynthesis of NADP. Catalyzes specifically the phosphorylation on 2'-hydroxyl of the adenosine moiety of NAD to yield NADP. The chain is NAD kinase from Neisseria gonorrhoeae (strain ATCC 700825 / FA 1090).